A 234-amino-acid chain; its full sequence is Sugar fermentation stimulation protein A (234 aa).

A DNA-binding region (H-T-H motif) is located at residues 201 to 220 (LLSEAQQRGVEILAYKAEIS).

It belongs to the SfsA family.

Its function is as follows. Binds to DNA non-specifically. Could be a regulatory factor involved in maltose metabolism. This chain is Sugar fermentation stimulation protein A, found in Shigella dysenteriae serotype 1 (strain Sd197).